A 328-amino-acid chain; its full sequence is DNA-directed RNA polymerase subunit alpha (328 aa).

An alpha N-terminal domain (alpha-NTD) region spans residues 1-234; the sequence is MQGSVTEFLK…EQLDAFVDLR (234 aa). Positions 248–328 are alpha C-terminal domain (alpha-CTD); sequence FDPILLRPVD…NWPPASIAED (81 aa).

The protein belongs to the RNA polymerase alpha chain family. In terms of assembly, homodimer. The RNAP catalytic core consists of 2 alpha, 1 beta, 1 beta' and 1 omega subunit. When a sigma factor is associated with the core the holoenzyme is formed, which can initiate transcription.

The catalysed reaction is RNA(n) + a ribonucleoside 5'-triphosphate = RNA(n+1) + diphosphate. Functionally, DNA-dependent RNA polymerase catalyzes the transcription of DNA into RNA using the four ribonucleoside triphosphates as substrates. The polypeptide is DNA-directed RNA polymerase subunit alpha (Haemophilus influenzae (strain PittEE)).